A 369-amino-acid chain; its full sequence is sn-glycerol-3-phosphate import ATP-binding protein UgpC (369 aa).

An ABC transporter domain is found at 4-235 (LSLRNVQKTY…PASTFVAGFI (232 aa)). 37–44 (GPSGCGKS) lines the ATP pocket.

It belongs to the ABC transporter superfamily. sn-glycerol-3-phosphate importer (TC 3.A.1.1.3) family. The complex is composed of two ATP-binding proteins (UgpC), two transmembrane proteins (UgpA and UgpE) and a solute-binding protein (UgpB).

The protein resides in the cell inner membrane. The catalysed reaction is sn-glycerol 3-phosphate(out) + ATP + H2O = sn-glycerol 3-phosphate(in) + ADP + phosphate + H(+). In terms of biological role, part of the ABC transporter complex UgpBAEC involved in sn-glycerol-3-phosphate (G3P) import. Responsible for energy coupling to the transport system. The sequence is that of sn-glycerol-3-phosphate import ATP-binding protein UgpC from Cupriavidus pinatubonensis (strain JMP 134 / LMG 1197) (Cupriavidus necator (strain JMP 134)).